The chain runs to 288 residues: Glucose-1-phosphate thymidylyltransferase (288 aa).

Glycine 8 is a binding site for dTDP-alpha-D-glucose. Residues glycine 8, glycine 11, threonine 12, arginine 13, lysine 23, glutamine 24, glutamine 80, glycine 85, and aspartate 108 each contribute to the dTTP site. DTDP-alpha-D-glucose contacts are provided by lysine 23, glutamine 24, glutamine 80, glycine 85, aspartate 108, asparagine 109, glycine 143, glutamate 158, lysine 159, valine 169, and aspartate 222. A Mg(2+)-binding site is contributed by aspartate 108. Aspartate 222 contributes to the Mg(2+) binding site.

It belongs to the glucose-1-phosphate thymidylyltransferase family. Mg(2+) is required as a cofactor.

The enzyme catalyses dTTP + alpha-D-glucose 1-phosphate + H(+) = dTDP-alpha-D-glucose + diphosphate. Its pathway is carbohydrate biosynthesis; dTDP-L-rhamnose biosynthesis. Catalyzes the conversion of glucose-1-phosphate and dTTP to dTDP-glucose and pyrophosphate. Involved in the biosynthesis of the dTDP-L-rhamnose which is a component of the critical linker, D-N-acetylglucosamine-L-rhamnose disaccharide, which connects the galactan region of arabinogalactan to peptidoglycan via a phosphodiester linkage. This is Glucose-1-phosphate thymidylyltransferase (rmlA) from Mycolicibacterium smegmatis (strain ATCC 700084 / mc(2)155) (Mycobacterium smegmatis).